A 164-amino-acid chain; its full sequence is Lipoprotein signal peptidase (164 aa).

Transmembrane regions (helical) follow at residues 12-32 (WLWL…LILQ), 70-90 (WFFA…MYRS), and 102-122 (ALII…GFVV). Residues Asp-123 and Asp-141 contribute to the active site. A helical transmembrane segment spans residues 137–157 (FNLADTAICVGAALIVLEGFL).

This sequence belongs to the peptidase A8 family.

Its subcellular location is the cell inner membrane. The catalysed reaction is Release of signal peptides from bacterial membrane prolipoproteins. Hydrolyzes -Xaa-Yaa-Zaa-|-(S,diacylglyceryl)Cys-, in which Xaa is hydrophobic (preferably Leu), and Yaa (Ala or Ser) and Zaa (Gly or Ala) have small, neutral side chains.. It functions in the pathway protein modification; lipoprotein biosynthesis (signal peptide cleavage). In terms of biological role, this protein specifically catalyzes the removal of signal peptides from prolipoproteins. The sequence is that of Lipoprotein signal peptidase from Escherichia coli O9:H4 (strain HS).